We begin with the raw amino-acid sequence, 737 residues long: Aryl hydrocarbon receptor nuclear translocator 2 (737 aa).

The disordered stretch occupies residues 1-73 (MATPAAVNPS…SRYDDDQIPG (73 aa)). Residues 64–73 (SRYDDDQIPG) show a composition bias toward basic and acidic residues. The bHLH domain occupies 78–131 (YARENHSEIERRRRNKMTQYITELSDMVPTCSALARKPDKLTILRMAVSHMKSM). 2 consecutive PAS domains span residues 149–221 (TEQE…ENSM) and 340–406 (SMDM…QVVK). The region spanning 413-456 (SVMYRFRMKNREWMLIRTSSFTFQNPYSDEIEYIICTNTNVKQL) is the PAC domain. Disordered stretches follow at residues 525–556 (MMVPSSTSGGQQLYSQGSPFQPGHSGKSFSSS) and 588–721 (QVSW…TTNY). Composition is skewed to polar residues over residues 528–543 (PSSTSGGQQLYSQGSP) and 588–626 (QVSWSGNRPPFSGQQIPAQSNKAQSSPFGIGSSHSYQAD). Residues 627–642 (PSSYSPLSSPATSSPS) show a composition bias toward low complexity. Polar residues predominate over residues 643 to 656 (GNAYSNLANRNTAF). Low complexity predominate over residues 659-688 (SGESSQSGGQFQGRPSEVWSQWQSQHHSQQ).

Efficient DNA binding requires dimerization with another bHLH protein. Heterodimer with the aryl hydrocarbon receptor (AHR), SIM1 or HIF2A/EPAS-1. As to expression, isoform 1 and isoform 2 are most highly expressed in the brain, eye and skeletal muscle and to a lower degree in liver, heart, kidney and swim bladder. Isoform 3 is most highly expressed in the eye, forebrain, midbrain, hindbrain, skeletal muscle, gills and brain but is barely detectable in liver, heart, kidney and swim bladder. Before the pharyngula period isoform 3 is expressed throughout the entire embryo and during this period extensively in the brain and eye.

It localises to the nucleus. Transcription factor that plays a role in the development of the hypothalamo-pituitary axis. Specifically recognizes the xenobiotic response element (XRE). Isoform 1 acts as a transcriptional activator. Isoform 3 acts as a transcriptional repressor. The polypeptide is Aryl hydrocarbon receptor nuclear translocator 2 (Danio rerio (Zebrafish)).